Here is a 399-residue protein sequence, read N- to C-terminus: Protein TWIN LOV 1 (399 aa).

Residues 26–97 enclose the PAS 1 domain; the sequence is LWIKEALEEL…MEIREAIREE (72 aa). The PAC 1 domain maps to 98–153; that stretch reads RSVQVSLLNYRKSGSPFWMLFHMCPVFGKDDGKVTNFVAVQVPISGREHHRKKLRN. The region spanning 249 to 320 is the PAS 2 domain; the sequence is SLVISLGRIK…EMKECILKGQ (72 aa). At Cys-296 the chain carries S-4a-FMN cysteine. Residues 320 to 376 form the PAC 2 domain; it reads QSCTVQILNYSNRKDKSSFWNLLHISPVRNASGKTAYFVGVQVEASCRNTEIKELRP.

In terms of assembly, interacts with VTC2, VTC5 and BLH10. FMN binds covalently to cysteine after exposure to blue light and is reversed in the dark.

The sequence is that of Protein TWIN LOV 1 (TLP1) from Arabidopsis thaliana (Mouse-ear cress).